We begin with the raw amino-acid sequence, 477 residues long: MSSNSGDVRLWGGRFADGPAEALAKLSASVHFDWRLAPYDIAGSRAHARVLHKANLLTDDELDRMLAGLDRLEADVADGTFVGTIADEDVHTALERGLLERLGPDLGGKLRAGRSRNDQVATLFRMYLRDHARVIGGLLADLQDALIGLAEAHPDVAMPGRTHLQHAQPVLFAHHVLAHVQALSRDAERLRQWDERTAVSPYGSGALAGSSLGLDPESVAKDLGFEHGSVANSIDGTASRDFVAEFAFITAMIGVNLSRIAEEVIIWNTKEFSFVTLHDAFSTGSSIMPQKKNPDIAELARGKSGRLIGNLTGLMATLKALPLAYNRDLQEDKEPVFDSCDQLEVLLPAFTGMMATLTVHRERMEELAPAGFSLATDIAEWLVKQGVPFRVAHEVAGECVKVAEGEGIELDGLTDEQFAKISSHLTPEVRGVLNVPGALASRDGRGGTAPSAVAVQLAEVRTDVAAQHAWATAKQKN.

The protein belongs to the lyase 1 family. Argininosuccinate lyase subfamily.

The protein resides in the cytoplasm. It carries out the reaction 2-(N(omega)-L-arginino)succinate = fumarate + L-arginine. Its pathway is amino-acid biosynthesis; L-arginine biosynthesis; L-arginine from L-ornithine and carbamoyl phosphate: step 3/3. The sequence is that of Argininosuccinate lyase from Streptomyces avermitilis (strain ATCC 31267 / DSM 46492 / JCM 5070 / NBRC 14893 / NCIMB 12804 / NRRL 8165 / MA-4680).